Here is a 183-residue protein sequence, read N- to C-terminus: Small ribosomal subunit protein uS4c (183 aa).

Residues 82–143 (MRLDNILFRL…KQRSKALIQN (62 aa)) enclose the S4 RNA-binding domain.

This sequence belongs to the universal ribosomal protein uS4 family. Part of the 30S ribosomal subunit. Contacts protein S5. The interaction surface between S4 and S5 is involved in control of translational fidelity.

It is found in the plastid. The protein localises to the chloroplast. Its function is as follows. One of the primary rRNA binding proteins, it binds directly to 16S rRNA where it nucleates assembly of the body of the 30S subunit. Functionally, with S5 and S12 plays an important role in translational accuracy. This Gladiolus communis (Cornflag) protein is Small ribosomal subunit protein uS4c (rps4).